The chain runs to 474 residues: Tumor necrosis factor receptor superfamily member 1B (474 aa).

The signal sequence occupies residues 1–22 (MAPAALWVALVFELQLWATGHT). The Extracellular portion of the chain corresponds to 23–258 (VPAQVVLTPY…PIIEQSTKGG (236 aa)). Threonine 30 carries O-linked (GalNAc...) threonine glycosylation. 4 TNFR-Cys repeats span residues 39-77 (ECQI…TVCA), 78-119 (DCEA…NRVC), 120-164 (ACEA…VLCK), and 165-203 (ACAP…AVCA). Disulfide bonds link cysteine 40/cysteine 54, cysteine 55/cysteine 68, cysteine 58/cysteine 76, cysteine 79/cysteine 94, cysteine 97/cysteine 111, cysteine 101/cysteine 119, cysteine 121/cysteine 127, cysteine 136/cysteine 145, cysteine 139/cysteine 163, and cysteine 166/cysteine 181. Asparagine 69 carries an N-linked (GlcNAc...) asparagine glycan. An N-linked (GlcNAc...) asparagine glycan is attached at asparagine 195. O-linked (GalNAc...) threonine glycosylation is found at threonine 208 and threonine 224. The disordered stretch occupies residues 220–243 (QPEPTRSQPLDQEPGPSQTPSILT). A helical transmembrane segment spans residues 259 to 288 (ISLPIGLIVGVTSLGLLMLGLVNCIILVQR). The Cytoplasmic portion of the chain corresponds to 289–474 (KKKPSCLQRD…WFDQIAVKVA (186 aa)). 3 disordered regions span residues 295-314 (LQRD…DAVG), 321-378 (LTTA…GSHG), and 397-463 (SQCS…PSQA). Over residues 297 to 310 (RDAKVPHVPDEKSQ) the composition is skewed to basic and acidic residues. Low complexity-rich tracts occupy residues 324-338 (APSS…SASA) and 363-378 (ARAS…GSHG). At serine 331 the chain carries Phosphoserine. Residues 429–442 (ECPSQSPCETTETL) are compositionally biased toward polar residues.

As to quaternary structure, binds to TRAF2. Interacts with BMX. Interacts (activated form) with XPNPEP3.

The protein localises to the membrane. Its function is as follows. Receptor with high affinity for TNFSF2/TNF-alpha and approximately 5-fold lower affinity for homotrimeric TNFSF1/lymphotoxin-alpha. The TRAF1/TRAF2 complex recruits the apoptotic suppressors BIRC2 and BIRC3 to TNFRSF1B/TNFR2. This chain is Tumor necrosis factor receptor superfamily member 1B (Tnfrsf1b), found in Mus musculus (Mouse).